Consider the following 357-residue polypeptide: Probable leucine aminopeptidase ARB_00576 (357 aa).

An N-terminal signal peptide occupies residues 1–15; the sequence is MKVLAALALSALAMA. N-linked (GlcNAc...) asparagine glycosylation occurs at N76. Zn(2+) is bound by residues H167 and D185. A disordered region spans residues 169-188; the sequence is DSINGNNPQGEAPGADDNGS. N186 is a glycosylation site (N-linked (GlcNAc...) asparagine). Residues E224 and D251 each contribute to the Zn(2+) site. N269 carries an N-linked (GlcNAc...) asparagine glycan. A disulfide bridge links C291 with C295. H324 contributes to the Zn(2+) binding site.

The protein belongs to the peptidase M28 family. M28E subfamily. Monomer. Requires Zn(2+) as cofactor.

The protein resides in the secreted. Functionally, probable extracellular aminopeptidase which contributes to pathogenicity. The chain is Probable leucine aminopeptidase ARB_00576 from Arthroderma benhamiae (strain ATCC MYA-4681 / CBS 112371) (Trichophyton mentagrophytes).